The sequence spans 506 residues: Chromosomal replication initiator protein DnaA (506 aa).

Positions 1–77 (MECATTATTP…IWAEESGAKR (77 aa)) are domain I, interacts with DnaA modulators. Positions 77 to 162 (RRVDLAVRNA…AVAGDVASGS (86 aa)) are domain II. Composition is skewed to basic and acidic residues over residues 103–112 (TERTDMHSGD) and 121–142 (SDGR…RAVE). The tract at residues 103–142 (TERTDMHSGDTRQQSARISDGRSTDARGADGRGSDARAVE) is disordered. The domain III, AAA+ region stretch occupies residues 163-384 (PLDARLTFET…GALNKLLAFN (222 aa)). ATP is bound by residues glycine 210, glycine 212, lysine 213, and threonine 214. The domain IV, binds dsDNA stretch occupies residues 385–506 (QLTGEPVTLE…EVLKRLALEA (122 aa)).

It belongs to the DnaA family. Oligomerizes as a right-handed, spiral filament on DNA at oriC.

It is found in the cytoplasm. In terms of biological role, plays an essential role in the initiation and regulation of chromosomal replication. ATP-DnaA binds to the origin of replication (oriC) to initiate formation of the DNA replication initiation complex once per cell cycle. Binds the DnaA box (a 9 base pair repeat at the origin) and separates the double-stranded (ds)DNA. Forms a right-handed helical filament on oriC DNA; dsDNA binds to the exterior of the filament while single-stranded (ss)DNA is stabiized in the filament's interior. The ATP-DnaA-oriC complex binds and stabilizes one strand of the AT-rich DNA unwinding element (DUE), permitting loading of DNA polymerase. After initiation quickly degrades to an ADP-DnaA complex that is not apt for DNA replication. Binds acidic phospholipids. The polypeptide is Chromosomal replication initiator protein DnaA (Xanthobacter autotrophicus (strain ATCC BAA-1158 / Py2)).